A 940-amino-acid polypeptide reads, in one-letter code: Acetyl-coenzyme A synthetase (940 aa).

The first 33 residues, 1 to 33 (MCCAIWSASRAPACSASQLSSSHAVRPSVVPDA), serve as a signal peptide directing secretion. Positions 1–289 (MCCAIWSASR…VQRSVTRLTA (289 aa)) are unknown. Disordered regions lie at residues 70 to 127 (TARA…RPRC), 157 to 202 (VAPP…ADSA), and 224 to 274 (ASSQ…QQTC). 2 stretches are compositionally biased toward polar residues: residues 72–95 (RATT…TAAS) and 107–120 (SSIS…TSGS). Low complexity-rich tracts occupy residues 184-202 (TAPP…ADSA) and 224-245 (ASSQ…SGRS). Over residues 258–274 (SSPTVQRNQTTVHQQTC) the composition is skewed to polar residues. The segment at 290 to 940 (MSNPSHAEVP…SVFEAIRASK (651 aa)) is acetyl-coenzyme A synthetase. CoA is bound by residues 480 to 483 (RRGK) and Thr599. Residues 675-677 (GEP), 699-704 (DTWWQT), Asp796, and Arg811 each bind ATP. Ser819 contacts CoA. Position 822 (Arg822) interacts with ATP. Positions 833, 835, and 838 each coordinate Mg(2+). Lys906 is subject to N6-acetyllysine.

It belongs to the ATP-dependent AMP-binding enzyme family. The cofactor is Mg(2+). In terms of processing, acetylated on Lys-906 by Pat in the presence of acetyl-CoA as an acetyl donor and ATP. Acetylation results in the inactivation of the enzyme. Deacetylation by the SIR2-homolog deacetylase CobB is required to activate the enzyme.

It carries out the reaction acetate + ATP + CoA = acetyl-CoA + AMP + diphosphate. In terms of biological role, catalyzes the conversion of acetate into acetyl-CoA (AcCoA), an essential intermediate at the junction of anabolic and catabolic pathways. AcsA undergoes a two-step reaction. In the first half reaction, AcsA combines acetate with ATP to form acetyl-adenylate (AcAMP) intermediate. In the second half reaction, it can then transfer the acetyl group from AcAMP to the sulfhydryl group of CoA, forming the product AcCoA. This Mycolicibacterium smegmatis (strain ATCC 700084 / mc(2)155) (Mycobacterium smegmatis) protein is Acetyl-coenzyme A synthetase (acsA).